Here is a 183-residue protein sequence, read N- to C-terminus: Large ribosomal subunit protein eL18 (183 aa).

The interval 146–183 (HFGPAPGVPHSHTKPYVRSKGRKFEKARGRRKSRGFRV) is disordered. Composition is skewed to basic residues over residues 156–166 (SHTKPYVRSKG) and 173–183 (RGRRKSRGFRV).

The protein belongs to the eukaryotic ribosomal protein eL18 family.

This is Large ribosomal subunit protein eL18 (RPL18) from Cicer arietinum (Chickpea).